Reading from the N-terminus, the 775-residue chain is BLOC-2 complex member HPS6 (775 aa).

Component of the biogenesis of lysosome-related organelles complex-2 (or BLOC2) composed of HPS3, HPS5 and HPS6. Interacts with HPS5 and HPS3. Interacts with biogenesis of lysosome-related organelles complex-1 (BLOC1). Interacts with AP-3 complex. Interacts with MNAT1. Interacts with DCTN1 and dynein intermediate chain. Ubiquitous.

Its subcellular location is the microsome membrane. It is found in the cytoplasm. It localises to the cytosol. The protein resides in the early endosome membrane. The protein localises to the lysosome membrane. Its function is as follows. May regulate the synthesis and function of lysosomes and of highly specialized organelles, such as melanosomes and platelet dense granules. Acts as a cargo adapter for the dynein-dynactin motor complex to mediate the transport of lysosomes from the cell periphery to the perinuclear region. Facilitates retrograde lysosomal trafficking by linking the motor complex to lysosomes, and perinuclear positioning of lysosomes is crucial for the delivery of endocytic cargos to lysosomes, for lysosome maturation and functioning. This chain is BLOC-2 complex member HPS6 (HPS6), found in Homo sapiens (Human).